The sequence spans 8081 residues: MASRRQKQFDRKYSSYRKFTATEDVNYSTHSSRSSYRSESLTSRTDGRGRSTSSEIIAGSESRSYPVYIAIQDYTPDKEDVEAIPLEQGQIVEVLDKKNSVRWLVRTKARPPRSGWVPGSYFETPTEFYKQRRRTREIENVSLSDEQAALVKRDQVYHELLRSEEEFVSSLRTCVDDYIKVLDDPEVPEAVKKNREELTLNIPELYNFHANVMLKGLNYYSDDPGKVGQTFVRLEKDFESHVEFYKQYADTLKLLEEPEIKRFFEGLSAKNDAGASSFVDHVKEIADRMVQYQNYFKEFVKYSARAHGSSKSIQKALELVTTIPQRVHDLEFTNNLKQHPGDTGKLGRIIRHDAFQVWEGDEPPKLRYVFLFRNKIMFTEQDASTSPPSYTHYSSIRLDKYNIRQHTTDEDTIVLQPQEPGLPSFRIKPKDFETSEYVRKAWLRDIAEEQEKYAAERDAISMTATSEMTASSVDFDMNASDQQSEFSEWSGSRKSSLFPGPEEGGPPRKKVKSPPVISPTGSSTSIYSGGSSSIDWTTTGTTLEMQGTRVTRTQYGFRTLQESSAKMCLKVTGYPLPDITWYKDDVQLHEDERHTFYSDEDGFFAMTIDPVQVTDTGRYTCMATNEYGQASTSAFFRVLKVEKEAAPPAFVTKLRDKECKEGDVIDFECEVEGWPEPELVWLVDDQPLRPSHDFRLQYDGQTAKLEIRDAQPDDTGVYTVKIQNEFGSIESKAELFVQADPDKNHVAPEFQATIEYVECDEGEEVRFKSVITGDPNPEIIWFINGKPLSESEKVKFISEDGICILTIKDVTRHFDGMVTCQGSNRLGSASCDGRLKVRVPPAPPTFNKPLEDKTVQEKSTVVFEVDVSGWPEPTLTFTLCGKELKNGEEGVEIVGHDGFYRISIPNTSMDKHDGEIVAKAQNEHGTAESRARLTVEQEEEESRSAPTFLKDIEDQTVKTGEFAVFETTVRGNPNPEVTWFINGHKMDQGSPGVKIEAHNHDHKLTIDSAQYAGTVLCRAENAVGRFETKARLVVLAPEKQKKPPKFVEILVDKTETVDNTVVFEVRVEGEPKPTVTWYLKGEELKQSDRVEIREFDGSIKISIKNIKIEDAGEIRAVATNSEGSDETKAKLTVQKKPFAPEFDLRPVSLTVEKGSEAVFSAHAFGIPLPTYEWSVNGRKVRDGQEGARVTRDESTVDGASILTIDTATYYSEVNHLTISVVAENTLGAEETGAQLTIEPKKESVVVEKQDLSSSEVQKEIAQQVKEASPEATTTITMETSLTSTKTTTMSTTEVTSTVGGVTVETKESESESATTVIGGGSGGVTEGSISVSKIEVVSKTDSQTDVREGTPKRRVSFAEEELPKEVIDSDRKKKKSPSPDKKEKSPEKTEEKPASPTKKTGEEVKSPKEKSPASPTKKEKSPAAEEVKSPTKKEKSPSSPTKKEKSPSSPTKKTGDEVKEKSPPKSPTKKEKSPEKPEDVKSPVKKEKSPDATNIVEVSSETTIEKTETTMTTEMTHESEESRTSVKKEKTPEKVDEKPKSPTKKDKSPEKSITEEIKSPVKKEKSPEKVEEKPASPTKKEKSPEKPASPTKKSENEVKSPTKKEKSPEKSVVEELKSPKEKSPEKADDKPKSPTKKEKSPEKSATEDVKSPTKKEKSPEKVEEKPTSPTKKESSPTKKTDDEVKSPTKKEKSPQTVEEKPASPTKKEKSPEKSVVEEVKSPKEKSPEKAEEKPKSPTKKEKSPEKSAAEEVKSPTKKEKSPEKSAEEKPKSPTKKESSPVKMADDEVKSPTKKEKSPEKVEEKPASPTKKEKTPEKSAAEELKSPTKKEKSPSSPTKKTGDESKEKSPEKPEEKPKSPTPKKSPPGSPKKKKSKSPEAEKPPAPKLTRDLKLQTVNKTDLAHFEVVVEHATECKWFLDGKEITTAQGVTVSKDDQFEFRCSIDTTMFGSGTVSVVASNAAGSVETKTELKVLETPKETKKPEFTDKLRDMEVTKGDTVQMDVIALHSPLYKWYQNGNLLEDGKNGVTIKNEENKSSLIIPNAQDSGKITVEASNEVGSSESSAQLTVNPPSTTPIVVDGPKSVTIKETETAEFKATISGFPAPTVKWTINEKIVEESRTITTIKTEDVYTLKISNAKIEQTGTVKVTAQNSAGQDSKQADLKVEPNVKAPKFKSQLTDKVADEGEPLRWNLELDGPSPGTEVSWLLNGQPLTKSDTVQVVDHGDGTYHVTIAEAKPEMSGTLTAKAKNAAGECETSAKVTVNGGNKKPEFVQAPQNHETTLEESVKFSAIVTGKPMPNVTWYLNNKKLIQSEEVKVKYVHETGKTSIRIQKPLMEHNGTIRVEAENVSGKVQATAQLKVDKKTEVPKFTTNMDDRQVKEGEDVKFTANVEGYPEPSVAWTLNGEPVSKHPNITVTDKDGEHTIEISAVTPEQAGELSCEATNPVGSKKRDVQLAVKKVGDAPTFAKNLEDRLITEGELTLMDAKLNIVKPKPKITWLKDGVEITSDGHYKIVEEEDGSLKLSILQTKLEDKGRITIKAESEFGVAECSASLGVVKGRPMAKPAFQSDIAPINLTEGDTLECKLLITGDPTPFVKWYIGTQLVCATEDTEISNANGVYTMKIHGVTADMTGKIKCVAYNKAGEVSTEGPLKVVAPIPVEFETSLCDATCREGDTLKLRAVLLGEPEPVVSWYVNGKKLEESQNIKIHSEKGTYTVTIKDITCDYSGQVVCEAINEYGKATSEATLLVLPRGEPPDFLEWLSNVRARTGTKVVHKVVFTGDPKPSLTWYINNKEILNSDLYTIVTDDKTSTLTINSFNPDVHVGEIICKAENDAGEVSCTANMITYTSDMFSESESEAQAEEFVGDDLTEDESLREEMHRTPTPVMAPKFITKIKDTKAKKGHSAVFECVVPDTKGVCCKWLKDGKEIELIARIRVQTRTGPEGHITQELVLDNVTPEDAGKYTCIVENTAGKDTCEATLTVIESLEKKSEKKAPEFIVALQDKTTKTSEKVVLECKVIGEPKPKVSWLHDNKTITQESITVESVEGVERVTITSSELSHQGKYTCIAENTEGTSKTEAFLTVQGEAPVFTKELQNKELSIGEKLVLSCSVKGSPQPHVDFYSFSETTKVETKITSSSRIAIEHDQTNTHWRMVISQITKEDIVSYKAIATNSIGTATSTSKITTKVEAPVFEQGLKKTSVKEKEEIKMEVKVGGSAPDVEWFKDDKPVSEDGNHEMKKNPETGVFTLVVKQAATTDAGKYTAKASNPAGTAESSAEAEVTQSLEKPTFVRELVTTEVKINETATLSVTVKGVPDPSVEWLKDGQPVQTDSSHVIAKVEGSGSYSITIKDARLEDSGKYACRATNPAGEAKTEANFAVVKNLVPPEFVEKLSPLEVKEKESTTLSVKVVGTPEPSVEWFKDDTPISIDNVHVIQKQTAVGSFSLTINDARQGDVGIYSCRARNEAGEALTTANFGIIRDSIPPEFTQKLRPLEVREQETLDLKVTVIGTPVPNVEWFKDDKPINIDNSHIFAKDEGSGHHTLTIKQARGEDVGVYTCKATNEAGEAKTTANMAVQEEIEAPLFVQGLKPYEVEQGKPAELVVRVEGKPEPEVKWFKDGVPIAIDNQHVIEKKGENGSHTLVIKDTNNADFGKYTCQATNKAGKDETVGELKIPKYSFEKQTAEEVKPLFIEPLKETFAVEGDTVVLECKVNKESHPQIKFFKNDQPVEIGQHMQLEVLEDGNIKLTIQNAKKEDVGAYRCEAVNVAGKANTNADLKIQFAAKVEEHVTDESGQLEEIGQFETVGDTASSKTDTGRGAPEFVELLRSCTVTEKQQAILKCKVKGEPRPKIKWTKEGKEVEMSARVRAEHKDDGTLTLTFDNVTQADAGEYRCEAENEYGSAWTEGPIIVTLEGAPKIDGEAPDFLQPVKPAVVTVGETAVLEGKISGKPKPSVKWYKNGEELKPSDRVKIENLDDGTQRLTVTNAKLDDMDEYRCEASNEFGDVWSDVTLTVKEPAQVAPGFFKELSAIQVKETETAKFECKVSGTKPDVKWFKDGTPLKEDKRVHFESTDDGTQRLVIEDSKTDDQGNYRIEVSNDAGVANSKVPLTVVPSETLKIKKGLTDVNVTQGTKILLSVEVEGKPKTVKWYKGTETVTSSQTTKIVQVTESEYKLEIESAEMSDTGAYRVVLSTDSFSVESSATVTVTKAAEKISLPSFKKGLADQSVPKGTPLVLEVEIEGKPKDVKWYKNGDEIKDGKVEDLGNGKYRLTIPDFQEKDVGEYSVTAANEAGEIESKAKVNVSAKPEIVSGLVPTTVKQGETATFNVKVKGPVKGVKWYKNGKEIPDAKTKDNGDGSYSLEIPNAQVEDAADYKVVVSNDAGDADSSAALTVKLADDGKDKVKPEIVSGLIPTTVKQGETATFNVKVKGPVKQVKWYKNGKEIPNAKAKDNGDGSYSLEIPNAQLDDTADYKVVVSNDAGDADSSAALTVKLPGIAIVKGLEDAEVPKGKKAVLQVETNKKPKEIKWYKNGKEITPSDKAQPGSDGDNKPQLVIPDAGDDDAAEYKVVLTDEDGNTADSSCALTVKLPAKEPKIIKGLEDQVVSIGSPIKLEIETSGSPKTVKWYKNGKELPGAAAKTIKIQKIDDNKYVLEIPSSVVEDTGDYKVEVANEAGSANSSGKITVEPKITFLKPLKDQSITEGENAEFSVETNTKPRIVKWYKNGQEIKPNSRFIIEQKTDTKYQLVIKNAVRDDADTYKIVLENTAGEAESSAQLTVKKAKAGLCKIVKGLEDQVVAKGAKMVFEVKIQGEPEDVRWLRDANVISAGANAIIEKIDDTTYRLIIPSADLKDAGEYTVEVINESGKAKSDAKGEVDEKPEIVRGLENIEIPEGDDDVFKVEVSAPVRQVKWYKNDQEIKPNSHLEAKKIGPKKYELAINRAQLDDGADYKVVLSNAAGDCDSSAALTVVKPNVLKIVDGLKDVDVEEPQPVELKVKVEGIPKVIKWYKNGQELKPDADGFKFEEKPESGEFSLTIPSSKKSDGGAYRVVLGNDKGEVYSGSVVHVKSAKSSEPTSGANFLSPLKDTEVEEGDMLTLQCTIAGEPFPEVIWEKDGVVLQKDDRITMRVALDGTATLRIRSAKKSDIGQYRVTAKNEAGSATSDCKVTVTEQGEQPSKPKFVIPLKTGAALPGDKKEFNVKVRGLPKPTLQWFLNGIPIKFDDRITLDDMADGNYCLTIRDVREEDFGTLKCIAKNENGTDETVCEFQQGAGHDDGSRDDLRYPPRFNVPLWDRRIPVGDPMFIECHVDANPTAEVEWFKDGKKIEHTAHTEIRNTVDGACRIKIIPFEESDIGVYMCVAVNELGQAETQATYQVEILEHVEEEKRREYAPKINPPLEDKTVNGGQPIRLSCKVDAIPRASVVWYKDGLPLRADSRTSIQYEEDGTATLAINDSTEEDIGAYRCVATNAHGTINTSCSVNVKVPKQEVKKEGEEPFFTKGLVDLWADRGDSFTLKCAVTGDPFPEIKWYRNGQLLRNGPRTVIETSPDGSCSLTVNESTMSDEGIYRCEAENAHGKAKTQATAHVQMALGKTEKPKMDEGKPPKFILELSDMSVSLGNVIDLECKVTGLPNPSVKWSKDGGPLIEDSRFEWSNEASKGVYQLRIKNATVHDEGTYRCVATNENGSATTKSFVRMDDGLGSGVVTASQPPRFTLKMGDVRTTEGQPLKLECKVDASPLPEMVWYKDGAIVTPSDRIQISLSPDGVATLLIPSCVYDDDGIYRVIATNPSGTAQDKGTATVKKLPRDSGARRSADRDVFDANKAPKLMEPLENIRIPEKQSFRLRCKFSGDPKPTIKWFKDGERVFPYGRLQLIESPDGVCELVVDSATRQDAGGYRCVAENTYGSARTSCDVNVIRGDRKPRDIDSSIREGKAPGFTTPLTIRRAKPGDSVTFECLPFGNPFPSIKWLKDGLELFSDEKIKMEAAADGTQRLILSDVTFLSEGYFRCVATNEHGTASTKAELVIEGDRTIGSRPLPEVNGEPEECKPRIRRGLYNMSIHEGNVVEMIVCATGIPTPTVKWYKDGQEIVGDGPDGKRVIFTDERGIHHLVIVNASPDDEGEYSLEATNKLGSAKTEGSLNIIRPRHIADADERGGMPFPPGFVRQLKNKHVFNHMPTIFDCLVVGHPAPEVEWFHNGKKIVPGGRIKIQSCGGGSHALIILDTTLEDAGEYVATAKNSHGSASSSAVLDVTVPFLDSIKFNGEIDVTPYLTEEYGFKKLNTASLPTPPDRGPFIKEVTGHYLTLSWIPTKRAPPRYPQVTYVIEIRELPEKQWSLLEYNIPEPVCKVRNLELGKSYQFRVRAENIYGISDPSPASPPSRLMAPPQPVFDRRTNKVIPLLDPYAEKALDMRYSEQYACAPWFSPGVVEKRYCAENDTLTIVLNVSGFPDPDIKWKFRGWDIDTSSPTSKCKVYTYGGSETTLAITGFSKENVGQYQCFAKNDYGDAQQNIMVDLATRPNFIQPLVNKTFSSAQPMRMDVRVDGEPFPELKWMKEWRPIVESSRIKFVQDGPYLCSLIINDPMWRDSGIYSCVAVNDAGQATTSCTVTVEAEGDYNDVELPRRRVTIESRRVRELYEISEKDEKLAAEGAPFRVKEKATGREFLAQLRPIDDALMRHVDIHNSLDHPGIVQMHRVLRDEKLALVVFDNANSTIDGLSSLAHPGVEIAEPKGVNRETCVRVFVRQLLLALKHMHDLRIAHLDLRPETILLQDDKLKLADFGQARRLLRGLITGEIKGSPEFVSPEIVRSYPLTLATDMWSTGVLTYVLLTGLSPFHGDNDNETLANVDSCQFDSSPLGNFSYDAGDFVKKLLTEIPVSRLTVDEALDHPWINDEKLKTEPLSADTLREFKYQHKWLERRVFVQQTPSEQILEAILGPATAQAQQNAPVAPEGRRPAEIYDYLRIQPKKPPPTVEYVPQPRKEHPPFIDEFGQLIDGDAFDRPEGTGFEGPHRQPPQIPPQPQRPNQAAHDSRRHEQQPQHQGQPQRIPVDQYGRPLVDPRYLNDPSHRPSSLDDAPFYVDKYGNPVHFDKYGRPMAPQNLEKRKLIPQDKGETPSHSKKEKTQHPVATPILASPGGDQQQQKIPMRMIRGERREIEEEIANRILSDISEEGSIAGSLASLEDFEIPKDFQVEASEPSTPTLTPEVTIRETIPKPTPSPTSPQKSPVPQPQGLLIPAKVTYSDSILAGLPAADKKVLEDAENDPSIPVGAPLFLEGLHGSDLTIDTTSASGLIKVTSPAINLSPNPKSPRRSTPGTKSPVVLSPRQEHSMEVLIATKRGKPGFLPPGELAEDIDDEDAFMDDRKKQVKPKDHDGENDFKDEKERLEKDKNRRTVNLDDLDKYRPSAFYKDDSDFGHPGYDIDATPWDSHYQIGPDTYLMAARGAAFNSRVRNYREELFGMGAPTVKQGFLGVRNRDITVRERRRYTDILRETTQGLEPKSHEQSTALLQKAPSATAIERIKADIEKVTPCATKKNDDGTFAPIFTARLRDVYLRKNQPAIFECAVSASPAPKVTWDFQGKILESNDRVTIEQDNNVARLILNHAAPYDLGEYVCTAINEYGTDKSSCRLISGETPSRPGRPEAELSSDTEIFIQWEAPEGPTYLEGITYRLEYRVAGPNDHGDPWITVSEKIDDESVIVKHLSPLGIYQFRVTAQNGFGLGLPSLSSRIVQTHGKGAPKLQIDVLKSEIRLNVVSMPQKSTNQLGGISEESEEDSEARTANEDMKSNLQLQTDDPTGRFQIGGLKFKGRFSVIRDAVDSTTEGHAHCAVKIRHPSSEAISEYESLRDGQHENVQRLIAAFNNSNFLYLLSERLYEDVFSRFVFNDYYTEEQVALTMRQVTSALHFLHFKGIAHLDVNPHNIMFQSKRSWVVKLVDFGRAQKVSGAVKPVDFDTKWASPEFHIPETPVTVQSDMWGMGVVTFCLLAGFHPFTSEYDREEEIKENVINVKCDPNLIPVNASQECLSFATWALKKSPVRRMRTDEALSHKFLSSDPSMVRRRESIKYSASRLRKLAAMIRQPTFSQPISEELESKYGK.

The tract at residues 24 to 57 (DVNYSTHSSRSSYRSESLTSRTDGRGRSTSSEII) is disordered. Residues 28 to 54 (STHSSRSSYRSESLTSRTDGRGRSTSS) show a composition bias toward low complexity. In terms of domain architecture, SH3 spans 63–127 (RSYPVYIAIQ…PGSYFETPTE (65 aa)). One can recognise a DH domain in the interval 152–330 (KRDQVYHELL…TTIPQRVHDL (179 aa)). A PH domain is found at 342 to 498 (DTGKLGRIIR…WSGSRKSSLF (157 aa)). Polar residues predominate over residues 479–495 (ASDQQSEFSEWSGSRKS). The tract at residues 479–531 (ASDQQSEFSEWSGSRKSSLFPGPEEGGPPRKKVKSPPVISPTGSSTSIYSGGS) is disordered. Over residues 518-531 (SPTGSSTSIYSGGS) the composition is skewed to low complexity. Ig-like C2-type domains follow at residues 547–633 (GTRV…ASTS), 648–736 (PAFV…AELF), 748–838 (PEFQ…LKVR), 946–1033 (PTFL…ARLV), 1044–1132 (PKFV…AKLT), and 1140–1227 (PEFD…NTLG). An intrachain disulfide couples cysteine 568 to cysteine 621. Composition is skewed to low complexity over residues 1283 to 1303 (STKT…GVTV) and 1326 to 1335 (EGSISVSKIE). The segment at 1283 to 1892 (STKTTTMSTT…PAPKLTRDLK (610 aa)) is disordered. Composition is skewed to basic and acidic residues over residues 1336-1351 (VVSK…EGTP), 1361-1446 (ELPK…KEKS), 1453-1490 (KTGD…EKSP), 1515-1585 (MTHE…KSPE), 1592-1832 (KKSE…KEKS), and 1839-1857 (KTGD…EKPK). 4 consecutive RCSD domains span residues 1375-1475 (KSPS…KSPE), 1479-1585 (DVKS…KSPE), 1597-1695 (EVKS…KSPQ), and 1700-1799 (KPAS…KSPE). Over residues 1858–1868 (SPTPKKSPPGS) the composition is skewed to pro residues. Positions 1875 to 1892 (KSPEAEKPPAPKLTRDLK) are enriched in basic and acidic residues. 41 Ig-like C2-type domains span residues 1982–2067 (PEFT…AQLT), 2071–2163 (PSTT…ADLK), 2171–2261 (PKFK…AKVT), 2269–2359 (PEFV…AQLK), 2367–2455 (PKFT…VQLA), 2463–2564 (PTFA…AKPA), 2563–2651 (PAFQ…GPLK), 2657–2746 (PVEF…ATLL), 2754–2858 (PDFL…SEAQ), 2887–2980 (PKFI…ATLT), 2994–3081 (PEFI…AFLT), 3087–3183 (PVFT…SKIT), 3189–3280 (PVFE…AEVT), 3286–3376 (PTFV…ANFA), 3384–3469 (PEFV…EALT), 3482–3572 (PEFT…ANMA), 3580–3667 (PLFV…ETVG), 3686–3777 (PLFI…LKIQ), 3817–3908 (PEFV…IIVT), 3920–4009 (PDFL…VTLT), 4018–4106 (PGFF…VPLT), 4109–4201 (PSET…ATVT), 4212–4297 (PSFK…AKVN), 4302–4387 (PEIV…AALT), 4400–4485 (PEIV…AALT), 4489–4580 (PGIA…CALT), 4588–4678 (PKII…GKIT), 4681–4771 (PKIT…AQLT), 4873–4961 (PEIV…AALT), 4965–5057 (PNVL…GSVV), 5067–5160 (PTSG…CKVT), 5171–5260 (PKFV…CEFQ), 5277–5366 (PRFN…ATYQ), 5383–5472 (PKIN…CSVN), 5487–5578 (PFFT…AHVQ), 5595–5685 (PKFI…SFVR), 5701–5790 (PRFT…GTAT), 5815–5904 (PKLM…CDVN), 5925–6014 (PGFT…AELV), 6038–6130 (PRIR…GSLN), and 6150–6239 (PGFV…AVLD). Cysteine 2582 and cysteine 2635 are joined by a disulfide. Disulfide bonds link cysteine 2908/cysteine 2964 and cysteine 3015/cysteine 3065. 2 disulfide bridges follow: cysteine 3707-cysteine 3759 and cysteine 3838-cysteine 3890. Residues 4525–4553 (KNGKEITPSDKAQPGSDGDNKPQLVIPDA) are disordered. 4 disulfides stabilise this stretch: cysteine 5298/cysteine 5350, cysteine 5404/cysteine 5456, cysteine 5508/cysteine 5560, and cysteine 5616/cysteine 5669. 2 cysteine pairs are disulfide-bonded: cysteine 5836/cysteine 5888 and cysteine 5946/cysteine 5998. A Fibronectin type-III 1 domain is found at 6278–6374 (PDRGPFIKEV…SPPSRLMAPP (97 aa)). 2 consecutive Ig-like C2-type domains span residues 6413 to 6502 (PGVV…IMVD) and 6507 to 6596 (PNFI…CTVT). The region spanning 6592–6878 (SCTVTVEAEG…VDEALDHPWI (287 aa)) is the Protein kinase 1 domain. Disordered regions lie at residues 6954–7130 (KKPP…QQKI), 7177–7217 (QVEA…PQPQ), 7284–7311 (PAIN…LSPR), 7324–7343 (RGKP…DDED), and 7348–7372 (DRKK…ERLE). A compositionally biased stretch (pro residues) spans 6999 to 7009 (RQPPQIPPQPQ). Over residues 7087–7110 (LEKRKLIPQDKGETPSHSKKEKTQ) the composition is skewed to basic and acidic residues. Pro residues predominate over residues 7200-7215 (KPTPSPTSPQKSPVPQ). Residues 7284-7302 (PAINLSPNPKSPRRSTPGT) are compositionally biased toward polar residues. The Ig-like C2-type 50 domain maps to 7528–7617 (PIFTARLRDV…TDKSSCRLIS (90 aa)). A disulfide bridge links cysteine 7549 with cysteine 7600. The Fibronectin type-III 2 domain occupies 7623–7721 (RPGRPEAELS…SSRIVQTHGK (99 aa)). The tract at residues 7746-7773 (STNQLGGISEESEEDSEARTANEDMKSN) is disordered. A compositionally biased stretch (basic and acidic residues) spans 7762-7771 (EARTANEDMK). The Protein kinase 2 domain occupies 7785 to 8035 (FQIGGLKFKG…TDEALSHKFL (251 aa)).

This sequence belongs to the protein kinase superfamily. CAMK Ser/Thr protein kinase family. As to quaternary structure, may interact (via fibronectin type-III domain 1, Ig-like C2-type domain 48/49 and protein kinase domain 1 or C-terminus of the interkinase region) with lim-9 (via LIM zinc-binding domain). May interact (via fibronectin type-III domain 1, Ig-like C2-type domain 48/49 and kinase protein domain 1 or Ig-like C2-type domain 50, fibronectin type-III domain 2 and kinase protein domain 2) with scpl-1 isoforms a and b (via FCP1 homology domain); the interaction may act as a molecular bridge to bring two unc-89 molecules together or to stabilize a loop between the 2 kinase domains. May interact (via SH3 domain) with unc-15. May interact (via Ig-like C2-type domain 1-3) with cpna-1 (via VWFA domain). May interact (via Ig-like C2-type domain 2/3 and, Ig-like C2-type domain 50 and fibronectin type-III domain 2) with mel-26 (via MATH domain). May interact (via DH and PH domains) with rho-1, ced-10, mig-2 and cdc-42. Expressed in body-wall, pharyngeal muscles and a few muscle cells of the tail (at protein level). Expressed in gonadal myoepithelial sheath cells (at protein level). Isoform c: Expressed in body wall and vulval muscles but not in pharyngeal muscles. Isoform d: Specifically expressed in vulval, intestinal, anal depressor and anal sphincter muscles.

It is found in the cytoplasm. Its subcellular location is the myofibril. The protein resides in the sarcomere. The protein localises to the m line. Structural component of the muscle M line which is involved in assembly and organization of sarcomere myofilaments. The large isoform a, isoform b, isoform d and isoform f play an essential role in maintaining the organization of sarcomeres but not myofilament alignment during body wall muscle development whereas the small isoform c and isoform d appear to have a minor role. Isoform b and isoform f are required for the organization of unc-15/paramyosin into sarcomere thick filaments in body wall muscles. By binding mel-26, a substrate adapter of the cul-3 E3 ubiquitin-protein ligase complex, regulates the organization of myosin thick filaments, likely by preventing the degradation of microtubule severing protein mei-1. Acts as a guanine nucleotide exchange factor (GEF) for Rho GTPase rho-1 but not ced-10, mig-2 and cdc-42. The large isoforms regulate Ca(2+) signaling during muscle contraction by ensuring the correct localization of sarco-endoplamic reticulum Ca(2+) ATPase sca-1 and ryanodine receptor unc-68. By controlling the contraction and/or organization of pharyngeal muscles, plays a role in the formation of pharyngeal gland cell extension. This is Muscle M-line assembly protein unc-89 (unc-89) from Caenorhabditis elegans.